Here is a 333-residue protein sequence, read N- to C-terminus: Nucleoid-associated protein PSPTO_1265 (333 aa).

The protein belongs to the YejK family.

The protein localises to the cytoplasm. Its subcellular location is the nucleoid. The protein is Nucleoid-associated protein PSPTO_1265 of Pseudomonas syringae pv. tomato (strain ATCC BAA-871 / DC3000).